The primary structure comprises 321 residues: Acetyl-coenzyme A carboxylase carboxyl transferase subunit alpha (321 aa).

The CoA carboxyltransferase C-terminal domain occupies 39–293; it reads KLEEKSRKLT…KTELKRNLEE (255 aa).

Belongs to the AccA family. In terms of assembly, acetyl-CoA carboxylase is a heterohexamer composed of biotin carboxyl carrier protein (AccB), biotin carboxylase (AccC) and two subunits each of ACCase subunit alpha (AccA) and ACCase subunit beta (AccD).

Its subcellular location is the cytoplasm. It catalyses the reaction N(6)-carboxybiotinyl-L-lysyl-[protein] + acetyl-CoA = N(6)-biotinyl-L-lysyl-[protein] + malonyl-CoA. The protein operates within lipid metabolism; malonyl-CoA biosynthesis; malonyl-CoA from acetyl-CoA: step 1/1. Functionally, component of the acetyl coenzyme A carboxylase (ACC) complex. First, biotin carboxylase catalyzes the carboxylation of biotin on its carrier protein (BCCP) and then the CO(2) group is transferred by the carboxyltransferase to acetyl-CoA to form malonyl-CoA. In Methylococcus capsulatus (strain ATCC 33009 / NCIMB 11132 / Bath), this protein is Acetyl-coenzyme A carboxylase carboxyl transferase subunit alpha.